A 236-amino-acid chain; its full sequence is F-box and leucine-rich protein 22 (236 aa).

The F-box domain maps to M1–L46. 6 LRR repeats span residues F15–P40, W43–W72, H98–G123, C124–N149, C150–F175, and C176–S201.

Directly interacts with SKP1 and CUL1. Enriched in cardiac muscle (at protein level).

The protein localises to the cytoplasm. The protein resides in the myofibril. It localises to the sarcomere. It is found in the z line. Its pathway is protein modification; protein ubiquitination. Substrate-recognition component of the SCF (SKP1-CUL1-F-box protein)-type E3 ubiquitin ligase complex. Promotes ubiquitination of sarcomeric proteins alpha-actinin-2 (ACTN2) and filamin-C (FLNC). The sequence is that of F-box and leucine-rich protein 22 (Fbxl22) from Mus musculus (Mouse).